A 254-amino-acid chain; its full sequence is Cobalt transport protein CbiM (254 aa).

The signal sequence occupies residues 1 to 31 (MKTILRPFTLLSRSIFLALFVLFLWSPDAHA). 6 consecutive transmembrane segments (helical) span residues 37–57 (GFLPPSWSLFWWVLTLPFLVV), 74–94 (LLLAMAGAFAFVLSSLKIPSV), 106–126 (LGAVLFGPSVMSVLGVIVLLF), 128–148 (ALLLAHGGLTTLGANAFSMAI), 169–189 (WLAVFLAAAIGDLMTYVVTSL), and 212–232 (IFALTQVPLAISEGILTVMVF).

Belongs to the CbiM family. In terms of assembly, forms an energy-coupling factor (ECF) transporter complex composed of an ATP-binding protein (A component, CbiO), a transmembrane protein (T component, CbiQ) and 2 possible substrate-capture proteins (S components, CbiM and CbiN) of unknown stoichimetry.

The protein localises to the cell inner membrane. The protein operates within cofactor biosynthesis; adenosylcobalamin biosynthesis. Functionally, part of the energy-coupling factor (ECF) transporter complex CbiMNOQ involved in cobalt import. The protein is Cobalt transport protein CbiM of Chlorobium limicola (strain DSM 245 / NBRC 103803 / 6330).